The primary structure comprises 64 residues: Large ribosomal subunit protein eL37 (64 aa).

Residues cysteine 20, cysteine 23, cysteine 35, and cysteine 38 each contribute to the Zn(2+) site. A C4-type zinc finger spans residues 20–38 (CRRCGRRAFHVRKKVCAAC).

It belongs to the eukaryotic ribosomal protein eL37 family. Requires Zn(2+) as cofactor.

Its function is as follows. Binds to the 23S rRNA. The polypeptide is Large ribosomal subunit protein eL37 (Methanococcus maripaludis (strain DSM 14266 / JCM 13030 / NBRC 101832 / S2 / LL)).